The following is a 435-amino-acid chain: Acetylcholine receptor-like protein cup-4 (435 aa).

Positions methionine 1–alanine 24 are cleaved as a signal peptide. N-linked (GlcNAc...) asparagine glycosylation is found at asparagine 41, asparagine 68, asparagine 237, and asparagine 249. The next 2 membrane-spanning stretches (helical) occupy residues valine 298–leucine 318 and isoleucine 341–leucine 361. An N-linked (GlcNAc...) asparagine glycan is attached at asparagine 403. A helical transmembrane segment spans residues proline 413–valine 433.

The protein belongs to the ligand-gated ion channel (TC 1.A.9) family. Acetylcholine receptor (TC 1.A.9.1) subfamily.

Its subcellular location is the cytoplasmic vesicle membrane. Its function is as follows. Thought to regulate endocytosis in coelomocytes through modulation of phospholipase C activity. Possible acetylcholine receptor. This Caenorhabditis briggsae protein is Acetylcholine receptor-like protein cup-4.